A 94-amino-acid polypeptide reads, in one-letter code: MKYPKQIRTYCPFCKRHTIHKVERVKKRPRSELSAGQRRFRRILKGYGGFPRPKPEGREKPVKKLDLRFRCTVCGKAHTRGRGFRVKKFELVEV.

Residues cysteine 11, cysteine 14, cysteine 71, and cysteine 74 each coordinate Zn(2+). A C4-type zinc finger spans residues 11–74 (CPFCKRHTIH…LDLRFRCTVC (64 aa)).

It belongs to the eukaryotic ribosomal protein eL42 family. In terms of assembly, part of the 50S ribosomal subunit. Zn(2+) serves as cofactor.

In terms of biological role, binds to the 23S rRNA. The protein is Large ribosomal subunit protein eL42 of Pyrococcus abyssi (strain GE5 / Orsay).